The following is a 357-amino-acid chain: GDP-polyphosphate phosphotransferase (357 aa).

The segment at 1–83 (MSEEPTVSPP…DSTSASLPAN (83 aa)) is disordered. Low complexity predominate over residues 14–25 (QPAAQPAKPARP). The segment covering 26-40 (AARRAPRKPATRRPR) has biased composition (basic residues).

This sequence belongs to the polyphosphate kinase 2 (PPK2) family. Class I subfamily. In terms of assembly, homotetramer. Also forms octamers. It depends on Mg(2+) as a cofactor. Mn(2+) serves as cofactor.

It catalyses the reaction [phosphate](n) + GTP = [phosphate](n+1) + GDP. The enzyme catalyses [phosphate](n) + ATP = [phosphate](n+1) + ADP. Functionally, uses inorganic polyphosphate (polyP) as a donor to convert GDP to GTP and ADP to ATP. Shows a preference for GDP. Can also catalyze the synthesis of polyP from GTP or ATP, but the rate of polyP utilization is 75-fold greater than the rate of polyP synthesis. This is GDP-polyphosphate phosphotransferase from Pseudomonas aeruginosa (strain ATCC 15692 / DSM 22644 / CIP 104116 / JCM 14847 / LMG 12228 / 1C / PRS 101 / PAO1).